Here is a 31-residue protein sequence, read N- to C-terminus: Photosystem II reaction center protein T (31 aa).

Residues 3–23 traverse the membrane as a helical segment; sequence AFTYTLLMTLGVVTLFFAVAF.

The protein belongs to the PsbT family. As to quaternary structure, PSII is composed of 1 copy each of membrane proteins PsbA, PsbB, PsbC, PsbD, PsbE, PsbF, PsbH, PsbI, PsbJ, PsbK, PsbL, PsbM, PsbT, PsbX, PsbY, Psb30/Ycf12, peripheral proteins PsbO, CyanoQ (PsbQ), PsbU, PsbV and a large number of cofactors. It forms dimeric complexes.

It is found in the cellular thylakoid membrane. Its function is as follows. Found at the monomer-monomer interface of the photosystem II (PS II) dimer, plays a role in assembly and dimerization of PSII. PSII is a light-driven water plastoquinone oxidoreductase, using light energy to abstract electrons from H(2)O, generating a proton gradient subsequently used for ATP formation. The chain is Photosystem II reaction center protein T from Prochlorococcus marinus (strain SARG / CCMP1375 / SS120).